Consider the following 458-residue polypeptide: GTPase Obg (458 aa).

Residues 1-157 enclose the Obg domain; it reads MSFLDRVKIY…ITLYLELKVL (157 aa). The region spanning 158-326 is the OBG-type G domain; the sequence is ADLGLVGFPN…VLNEIVKVIS (169 aa). GTP contacts are provided by residues 164–171, 189–193, 210–213, 280–283, and 307–309; these read GFPNAGKS, FTTLN, DIPG, NKAD, and SAA. The Mg(2+) site is built by serine 171 and threonine 191. Residues 341-419 enclose the OCT domain; the sequence is AVHGVEPLFK…VGQKEFEWSG (79 aa). A disordered region spans residues 420–458; sequence TELDSERAEQPDFEGYKRRTTQAERLEKRRQRRLKKEEK. Residues 423–446 show a composition bias toward basic and acidic residues; it reads DSERAEQPDFEGYKRRTTQAERLE. Positions 447–458 are enriched in basic residues; the sequence is KRRQRRLKKEEK.

This sequence belongs to the TRAFAC class OBG-HflX-like GTPase superfamily. OBG GTPase family. As to quaternary structure, monomer. Mg(2+) serves as cofactor.

Its subcellular location is the cytoplasm. Its function is as follows. An essential GTPase which binds GTP, GDP and possibly (p)ppGpp with moderate affinity, with high nucleotide exchange rates and a fairly low GTP hydrolysis rate. Plays a role in control of the cell cycle, stress response, ribosome biogenesis and in those bacteria that undergo differentiation, in morphogenesis control. The polypeptide is GTPase Obg (Elusimicrobium minutum (strain Pei191)).